Reading from the N-terminus, the 175-residue chain is Small ribosomal subunit protein uS7 (175 aa).

It belongs to the universal ribosomal protein uS7 family. As to quaternary structure, part of the 30S ribosomal subunit. Contacts proteins S9 and S11.

One of the primary rRNA binding proteins, it binds directly to 16S rRNA where it nucleates assembly of the head domain of the 30S subunit. Is located at the subunit interface close to the decoding center, probably blocks exit of the E-site tRNA. This is Small ribosomal subunit protein uS7 from Neorickettsia sennetsu (strain ATCC VR-367 / Miyayama) (Ehrlichia sennetsu).